Consider the following 211-residue polypeptide: Ribosomal RNA small subunit methyltransferase G (211 aa).

S-adenosyl-L-methionine-binding positions include Gly-75, Leu-80, 130-131 (VE), and Arg-145.

Belongs to the methyltransferase superfamily. RNA methyltransferase RsmG family.

The protein localises to the cytoplasm. The enzyme catalyses guanosine(527) in 16S rRNA + S-adenosyl-L-methionine = N(7)-methylguanosine(527) in 16S rRNA + S-adenosyl-L-homocysteine. Specifically methylates the N7 position of guanine in position 527 of 16S rRNA. In Aromatoleum aromaticum (strain DSM 19018 / LMG 30748 / EbN1) (Azoarcus sp. (strain EbN1)), this protein is Ribosomal RNA small subunit methyltransferase G.